A 285-amino-acid polypeptide reads, in one-letter code: Purine biosynthesis transcriptional repressor PurR (285 aa).

Residues 1-73 are DNA binding domain; sequence MKFRRSGRLV…GAAGGVKYIP (73 aa). The interval 74-285 is effector binding domain; sequence KMKQAEAEEF…NLLKNGETES (212 aa). Tyr102 contacts guanosine 3',5'-bis(diphosphate). 5-phospho-alpha-D-ribose 1-diphosphate-binding residues include Ala138, Thr139, Lys140, and Arg160. Residues Gly178 and Ser179 each coordinate guanosine 3',5'-bis(diphosphate). 5-phospho-alpha-D-ribose 1-diphosphate-binding residues include Asp203, Asp204, Phe205, Lys207, and Ala208. Lys207 is a guanosine 3',5'-bis(diphosphate) binding site. Guanosine 3',5'-bis(diphosphate)-binding residues include Gly209, Gly210, and Thr211. Residue Thr211 coordinates 5-phospho-alpha-D-ribose 1-diphosphate.

The protein belongs to the purine/pyrimidine phosphoribosyltransferase family. PurR subfamily. As to quaternary structure, homodimer.

Its activity is regulated as follows. The binding of PurR to DNA, and therefore the repressor activity, is influenced by interaction with the effector molecules 5-phosphoribosyl 1-pyrophosphate (PRPP) and (p)ppGpp. PRPP binds to PurR and reduces affinity of PurR for DNA, which inhibits the repressor activity and induces transcription of the target genes. On the contrary, (p)ppGpp enhances binding of PurR to DNA and repression of the transcription. PRPP and (p)ppGpp compete for PurR binding and allosteric control of transcription. ppGpp maintains PurR-DNA interaction and prevents PRPP from de-repressing PurR regulation during conditions that lead to (p)ppGpp induction, such as upon amino acid starvation. Functionally, DNA-binding transcriptional repressor that controls the expression of a number of genes involved in the synthesis, metabolism and transport of purines. In response to a signal of excess adenine, represses the transcription of the pur operon, which encodes enzymes of the purine biosynthetic pathway. It also represses the expression of the purA and purR genes. In addition, controls the expression of several other genes or operons, which encode enzymes or transporters playing a role in purine nucleotide metabolism. Acts by binding directly to specific DNA sequences, named PurBoxes, in the upstream control regions of affected genes. Two PurBoxes are required for high-affinity PurR binding. Also responds to amino acid starvation via (p)ppGpp, which strongly increases PurR activity and repression of purine nucleotide biosynthesis genes. In Bacillus subtilis (strain 168), this protein is Purine biosynthesis transcriptional repressor PurR.